Here is a 566-residue protein sequence, read N- to C-terminus: Solute carrier family 22 member 16 (566 aa).

The helical transmembrane segment at 20–40 threads the bilayer; sequence FASAFQTISCGIHYLASVFIA. N-linked (GlcNAc...) asparagine glycosylation is found at Asn52, Asn60, and Asn112. 5 consecutive transmembrane segments (helical) span residues 149–169, 176–196, 201–221, 237–257, and 261–281; these read LIQPIFMLGVLIGAVIFGDIA, PIIWITSTGQFLFGIAVAFTF, FVIVRFLLAMVSSGYYVVVFV, MHVHAFFAVGVMIVSLVGFLV, and WIYQIILSLTTLPFVLCCWML. N-linked (GlcNAc...) asparagine glycosylation occurs at Asn344. 6 helical membrane-spanning segments follow: residues 351-371, 381-401, 408-428, 436-456, 468-488, and 493-513; these read TITVWLIWFTGSLGYYVFALN, LNLFLTGAVEIPSYIVACLGM, NTLAPFLIISAVICGVIMLIP, IAMSMAGKFSIAVAFGLIYLY, LAVGSGSMMCRIGSVVAPFCV, and VWIFMPQMLVGIMAFLTGILT.

Belongs to the major facilitator (TC 2.A.1) superfamily. Organic cation transporter (TC 2.A.1.19) family.

The protein localises to the membrane. Functionally, high affinity carnitine transporter. The sequence is that of Solute carrier family 22 member 16 (slc22a16) from Xenopus laevis (African clawed frog).